A 166-amino-acid chain; its full sequence is MKYTSYFLALLLCVLLGFSGSYGQGQFFREIENLKEYFNASNPDVAKGGPLFSEILKNWKDESDKKIIQSQIVSFYFKLFENLKDNQIIQRSMDIIKQNMFQKFLNGSSEKLEDFKKLIQIPVDDLQTQRKAINELIKVMNDLSPKSNLRKRKRSQNLFRGRRASM.

Positions 1–23 (MKYTSYFLALLLCVLLGFSGSYG) are cleaved as a signal peptide. Position 24 is a pyrrolidone carboxylic acid (Gln24). N-linked (GlcNAc...) asparagine glycosylation is found at Asn39 and Asn106.

It belongs to the type II (or gamma) interferon family. As to quaternary structure, homodimer. Interacts with IFNGR1 (via extracellular domain); this interaction promotes IFNGR1 dimerization. As to expression, released primarily from activated T lymphocytes.

The protein resides in the secreted. In terms of biological role, type II interferon produced by immune cells such as T-cells and NK cells that plays crucial roles in antimicrobial, antiviral, and antitumor responses by activating effector immune cells and enhancing antigen presentation. Primarily signals through the JAK-STAT pathway after interaction with its receptor IFNGR1 to affect gene regulation. Upon IFNG binding, IFNGR1 intracellular domain opens out to allow association of downstream signaling components JAK2, JAK1 and STAT1, leading to STAT1 activation, nuclear translocation and transcription of IFNG-regulated genes. Many of the induced genes are transcription factors such as IRF1 that are able to further drive regulation of a next wave of transcription. Plays a role in class I antigen presentation pathway by inducing a replacement of catalytic proteasome subunits with immunoproteasome subunits. In turn, increases the quantity, quality, and repertoire of peptides for class I MHC loading. Increases the efficiency of peptide generation also by inducing the expression of activator PA28 that associates with the proteasome and alters its proteolytic cleavage preference. Up-regulates as well MHC II complexes on the cell surface by promoting expression of several key molecules such as cathepsins B/CTSB, H/CTSH, and L/CTSL. Participates in the regulation of hematopoietic stem cells during development and under homeostatic conditions by affecting their development, quiescence, and differentiation. The protein is Interferon gamma (IFNG) of Bubalus carabanensis (Swamp type water buffalo).